We begin with the raw amino-acid sequence, 118 residues long: Large ribosomal subunit protein bL19 (118 aa).

This sequence belongs to the bacterial ribosomal protein bL19 family.

Its function is as follows. This protein is located at the 30S-50S ribosomal subunit interface and may play a role in the structure and function of the aminoacyl-tRNA binding site. In Wolinella succinogenes (strain ATCC 29543 / DSM 1740 / CCUG 13145 / JCM 31913 / LMG 7466 / NCTC 11488 / FDC 602W) (Vibrio succinogenes), this protein is Large ribosomal subunit protein bL19.